A 251-amino-acid polypeptide reads, in one-letter code: uncharacterized protein (251 aa).

Residues 1-18 (MRILIILSIILCSLFARA) form the signal peptide.

It belongs to the MlaA family.

This is an uncharacterized protein from Rickettsia felis (strain ATCC VR-1525 / URRWXCal2) (Rickettsia azadi).